The sequence spans 131 residues: MKSSATVVLLVAAVTAAMVMSSSASGDAVMIDEHNNIMTSVEGKRGIGSSVVANGGNRKMANVLLSGWENKCAGHGESCLGIGISGCCKGYYCSWPSGSICLCVPKGDPCGAMHTCCDGLSCTGFFSGDCV.

Positions 1–24 (MKSSATVVLLVAAVTAAMVMSSSA) are cleaved as a signal peptide. Residues 25–69 (SGDAVMIDEHNNIMTSVEGKRGIGSSVVANGGNRKMANVLLSGWE) constitute a propeptide that is removed on maturation. Disulfide bonds link C72/C88, C79/C93, C87/C101, C103/C117, C110/C122, and C116/C130.

It belongs to the urticatoxin-2 family. In terms of tissue distribution, expressed in trichomes, that are stiff epidermal hairs located on the surface of petioles and leaves.

It localises to the secreted. Plant defense neurotoxin that causes pain and systemic symptoms in mammals via modulation of voltage-gated sodium channels (Nav). Potent modulator of human Nav1.5/SCN5A (EC(50)=55 nM), Nav1.6/SCN8A (EC(50)=0.86 nM), and Nav1.7/SCN9A (EC(50)=208 nM), where it shifts the activation threshold to more negative potentials and delays fast inactivation. Also shifts the voltage-dependence of steady-state fast inactivation of Nav1.6/SCN8A, but not that of Nav1.5/SCN5A or Nav1.7/SCN9A. On Nav1.7/SCN9A, principally acts by binding to extracellular loops of domain IV (Nav site 3). In vivo, intraplantar injection into mice causes numerous dose-dependent, immediate, and long-lasting spontaneous pain behaviors, while no swelling is observed in the injected paw. At the highest doses tested, systemic symptoms including hypokinesia and hypersalivation are observed. This chain is Beta/delta-urticatoxin-Dm2a, found in Dendrocnide moroides (Gympie stinging tree).